The primary structure comprises 545 residues: Glucose-6-phosphate isomerase (545 aa).

Glu-353 functions as the Proton donor in the catalytic mechanism. Active-site residues include His-384 and Lys-510.

It belongs to the GPI family.

It localises to the cytoplasm. The catalysed reaction is alpha-D-glucose 6-phosphate = beta-D-fructose 6-phosphate. It functions in the pathway carbohydrate biosynthesis; gluconeogenesis. It participates in carbohydrate degradation; glycolysis; D-glyceraldehyde 3-phosphate and glycerone phosphate from D-glucose: step 2/4. In terms of biological role, catalyzes the reversible isomerization of glucose-6-phosphate to fructose-6-phosphate. The chain is Glucose-6-phosphate isomerase from Aromatoleum aromaticum (strain DSM 19018 / LMG 30748 / EbN1) (Azoarcus sp. (strain EbN1)).